A 1428-amino-acid polypeptide reads, in one-letter code: Gag-Pol polyprotein (1428 aa).

The N-myristoyl glycine; by host moiety is linked to residue Gly-2. Residues 7 to 31 (VLSGKKLDSWEKIRLRPGGNKKYRL) are interaction with Gp41. An interaction with host CALM1 region spans residues 8 to 43 (LSGKKLDSWEKIRLRPGGNKKYRLKHLVWASRELEK). The interval 12–19 (KLDSWEKI) is interaction with host AP3D1. Positions 14–33 (DSWEKIRLRPGGNKKYRLKH) are interaction with membrane phosphatidylinositol 4,5-bisphosphate and RNA. Positions 16–22 (WEKIRLR) match the Nuclear export signal motif. Residues 26–32 (NKKYRLK) carry the Nuclear localization signal motif. An interaction with membrane phosphatidylinositol 4,5-bisphosphate region spans residues 73-77 (EELRS). Residues 108–130 (QNKNKQRTQQAAANTGSSQNYPI) are disordered. Residues 114-130 (RTQQAAANTGSSQNYPI) show a composition bias toward polar residues. Position 128 is a phosphotyrosine; by host (Tyr-128). The interval 185–223 (NVVGGHQAAMQMLKDTINEEAAEWDRLHPVHAGPIPPGQ) is interaction with human PPIA/CYPA and NUP153. Residues 273–359 (YSPVSILDIR…GGPGHKARVL (87 aa)) are dimerization/Multimerization of capsid protein p24. CCHC-type zinc fingers lie at residues 384–401 (IKCF…NCRA) and 405–422 (KGCW…DCTE). Residues 438 to 475 (EAREFSSEQTRANSPTSRNLWDGGKDDLPCETGAERQG) form a disordered region. The span at 444 to 456 (SEQTRANSPTSRN) shows a compositional bias: polar residues. Residues 460 to 475 (GGKDDLPCETGAERQG) show a composition bias toward basic and acidic residues. The segment at 482–486 (PQITL) is dimerization of protease. The Peptidase A2 domain maps to 501-570 (IEALLDTGAD…TPVNIIGRNM (70 aa)). Asp-506 (for protease activity; shared with dimeric partner) is an active-site residue. Dimerization of protease regions lie at residues 530–536 (GIGGFIK) and 569–581 (NMLT…LNFP). Residues 624-814 (EGKISKIGPE…PPFLWMGYEL (191 aa)) form the Reverse transcriptase domain. Mg(2+) is bound by residues Asp-690, Asp-765, and Asp-766. Residues 807-815 (FLWMGYELH) form an RT 'primer grip' region. The Tryptophan repeat motif signature appears at 978 to 994 (WEAWWMEYWQATWIPEW). One can recognise an RNase H type-1 domain in the interval 1014–1137 (IAGAETFYVD…VDKLVSSGIR (124 aa)). Mg(2+) is bound by residues Asp-1023, Glu-1058, Asp-1078, and Asp-1129. The Integrase-type zinc-finger motif lies at 1143–1184 (DGIDKAQEDHEKYHCNWRAMASDFNLPPVVAKEIVASCNKCQ). Residues His-1152, His-1156, Cys-1180, and Cys-1183 each coordinate Zn(2+). Positions 1194-1344 (VDCSPGIWQL…SAGERIIDII (151 aa)) constitute an Integrase catalytic domain. Asp-1204, Asp-1256, and Glu-1292 together coordinate Mg(2+). The integrase-type DNA-binding region spans 1363-1410 (FRVYYRDSRDPIWKGPAKLLWKGEGAVVIQDNSDIKVVPRRKAKIIRD).

As to quaternary structure, homotrimer; further assembles as hexamers of trimers. Interacts with gp41 (via C-terminus). Interacts with host CALM1; this interaction induces a conformational change in the Matrix protein, triggering exposure of the myristate group. Interacts with host AP3D1; this interaction allows the polyprotein trafficking to multivesicular bodies during virus assembly. Part of the pre-integration complex (PIC) which is composed of viral genome, matrix protein, Vpr and integrase. In terms of assembly, homodimer; the homodimer further multimerizes as homohexamers or homopentamers. Interacts with human PPIA/CYPA; This interaction stabilizes the capsid. Interacts with human NUP153. Interacts with host PDZD8; this interaction stabilizes the capsid. Interacts with monkey TRIM5; this interaction destabilizes the capsid. Homodimer, whose active site consists of two apposed aspartic acid residues. As to quaternary structure, heterodimer of p66 RT and p51 RT (RT p66/p51). Heterodimerization of RT is essential for DNA polymerase activity. The overall folding of the subdomains is similar in p66 RT and p51 RT but the spatial arrangements of the subdomains are dramatically different. In terms of assembly, homotetramer; may further associate as a homohexadecamer. Part of the pre-integration complex (PIC) which is composed of viral genome, matrix protein, Vpr and integrase. Interacts with human SMARCB1/INI1 and human PSIP1/LEDGF isoform 1. Interacts with human KPNA3; this interaction might play a role in nuclear import of the pre-integration complex. Interacts with human NUP153; this interaction might play a role in nuclear import of the pre-integration complex. The cofactor is Mg(2+). Specific enzymatic cleavages by the viral protease yield mature proteins. The protease is released by autocatalytic cleavage. The polyprotein is cleaved during and after budding, this process is termed maturation. Proteolytic cleavage of p66 RT removes the RNase H domain to yield the p51 RT subunit. Nucleocapsid protein p7 might be further cleaved after virus entry. In terms of processing, tyrosine phosphorylated presumably in the virion by a host kinase. Phosphorylation is apparently not a major regulator of membrane association. Post-translationally, phosphorylated possibly by host MAPK1; this phosphorylation is necessary for Pin1-mediated virion uncoating. Methylated by host PRMT6, impairing its function by reducing RNA annealing and the initiation of reverse transcription.

The protein localises to the host cell membrane. It is found in the host endosome. It localises to the host multivesicular body. Its subcellular location is the virion membrane. The protein resides in the host nucleus. The protein localises to the host cytoplasm. It is found in the virion. The catalysed reaction is Specific for a P1 residue that is hydrophobic, and P1' variable, but often Pro.. The enzyme catalyses Endohydrolysis of RNA in RNA/DNA hybrids. Three different cleavage modes: 1. sequence-specific internal cleavage of RNA. Human immunodeficiency virus type 1 and Moloney murine leukemia virus enzymes prefer to cleave the RNA strand one nucleotide away from the RNA-DNA junction. 2. RNA 5'-end directed cleavage 13-19 nucleotides from the RNA end. 3. DNA 3'-end directed cleavage 15-20 nucleotides away from the primer terminus.. It carries out the reaction 3'-end directed exonucleolytic cleavage of viral RNA-DNA hybrid.. It catalyses the reaction DNA(n) + a 2'-deoxyribonucleoside 5'-triphosphate = DNA(n+1) + diphosphate. Protease: The viral protease is inhibited by many synthetic protease inhibitors (PIs), such as amprenavir, atazanavir, indinavir, loprinavir, nelfinavir, ritonavir and saquinavir. Use of protease inhibitors in tritherapy regimens permit more ambitious therapeutic strategies. Reverse transcriptase/ribonuclease H: RT can be inhibited either by nucleoside RT inhibitors (NRTIs) or by non nucleoside RT inhibitors (NNRTIs). NRTIs act as chain terminators, whereas NNRTIs inhibit DNA polymerization by binding a small hydrophobic pocket near the RT active site and inducing an allosteric change in this region. Classical NRTIs are abacavir, adefovir (PMEA), didanosine (ddI), lamivudine (3TC), stavudine (d4T), tenofovir (PMPA), zalcitabine (ddC), and zidovudine (AZT). Classical NNRTIs are atevirdine (BHAP U-87201E), delavirdine, efavirenz (DMP-266), emivirine (I-EBU), and nevirapine (BI-RG-587). The tritherapies used as a basic effective treatment of AIDS associate two NRTIs and one NNRTI. Mediates, with Gag polyprotein, the essential events in virion assembly, including binding the plasma membrane, making the protein-protein interactions necessary to create spherical particles, recruiting the viral Env proteins, and packaging the genomic RNA via direct interactions with the RNA packaging sequence (Psi). Gag-Pol polyprotein may regulate its own translation, by the binding genomic RNA in the 5'-UTR. At low concentration, the polyprotein would promote translation, whereas at high concentration, the polyprotein would encapsidate genomic RNA and then shut off translation. Its function is as follows. Targets the polyprotein to the plasma membrane via a multipartite membrane-binding signal, that includes its myristoylated N-terminus. Matrix protein is part of the pre-integration complex. Implicated in the release from host cell mediated by Vpu. Binds to RNA. Functionally, forms the conical core that encapsulates the genomic RNA-nucleocapsid complex in the virion. Most core are conical, with only 7% tubular. The core is constituted by capsid protein hexamer subunits. The core is disassembled soon after virion entry. Host restriction factors such as TRIM5-alpha or TRIMCyp bind retroviral capsids and cause premature capsid disassembly, leading to blocks in reverse transcription. Capsid restriction by TRIM5 is one of the factors which restricts HIV-1 to the human species. Host PIN1 apparently facilitates the virion uncoating. On the other hand, interactions with PDZD8 or CYPA stabilize the capsid. In terms of biological role, encapsulates and protects viral dimeric unspliced genomic RNA (gRNA). Binds these RNAs through its zinc fingers. Acts as a nucleic acid chaperone which is involved in rearangement of nucleic acid secondary structure during gRNA retrotranscription. Also facilitates template switch leading to recombination. As part of the polyprotein, participates in gRNA dimerization, packaging, tRNA incorporation and virion assembly. Aspartyl protease that mediates proteolytic cleavages of Gag and Gag-Pol polyproteins during or shortly after the release of the virion from the plasma membrane. Cleavages take place as an ordered, step-wise cascade to yield mature proteins. This process is called maturation. Displays maximal activity during the budding process just prior to particle release from the cell. Also cleaves Nef and Vif, probably concomitantly with viral structural proteins on maturation of virus particles. Hydrolyzes host EIF4GI and PABP1 in order to shut off the capped cellular mRNA translation. The resulting inhibition of cellular protein synthesis serves to ensure maximal viral gene expression and to evade host immune response. Also mediates cleavage of host YTHDF3. Mediates cleavage of host CARD8, thereby activating the CARD8 inflammasome, leading to the clearance of latent HIV-1 in patient CD4(+) T-cells after viral reactivation; in contrast, HIV-1 can evade CARD8-sensing when its protease remains inactive in infected cells prior to viral budding. Its function is as follows. Multifunctional enzyme that converts the viral RNA genome into dsDNA in the cytoplasm, shortly after virus entry into the cell. This enzyme displays a DNA polymerase activity that can copy either DNA or RNA templates, and a ribonuclease H (RNase H) activity that cleaves the RNA strand of RNA-DNA heteroduplexes in a partially processive 3' to 5' endonucleasic mode. Conversion of viral genomic RNA into dsDNA requires many steps. A tRNA(3)-Lys binds to the primer-binding site (PBS) situated at the 5'-end of the viral RNA. RT uses the 3' end of the tRNA primer to perform a short round of RNA-dependent minus-strand DNA synthesis. The reading proceeds through the U5 region and ends after the repeated (R) region which is present at both ends of viral RNA. The portion of the RNA-DNA heteroduplex is digested by the RNase H, resulting in a ssDNA product attached to the tRNA primer. This ssDNA/tRNA hybridizes with the identical R region situated at the 3' end of viral RNA. This template exchange, known as minus-strand DNA strong stop transfer, can be either intra- or intermolecular. RT uses the 3' end of this newly synthesized short ssDNA to perform the RNA-dependent minus-strand DNA synthesis of the whole template. RNase H digests the RNA template except for two polypurine tracts (PPTs) situated at the 5'-end and near the center of the genome. It is not clear if both polymerase and RNase H activities are simultaneous. RNase H probably can proceed both in a polymerase-dependent (RNA cut into small fragments by the same RT performing DNA synthesis) and a polymerase-independent mode (cleavage of remaining RNA fragments by free RTs). Secondly, RT performs DNA-directed plus-strand DNA synthesis using the PPTs that have not been removed by RNase H as primers. PPTs and tRNA primers are then removed by RNase H. The 3' and 5' ssDNA PBS regions hybridize to form a circular dsDNA intermediate. Strand displacement synthesis by RT to the PBS and PPT ends produces a blunt ended, linear dsDNA copy of the viral genome that includes long terminal repeats (LTRs) at both ends. Functionally, catalyzes viral DNA integration into the host chromosome, by performing a series of DNA cutting and joining reactions. This enzyme activity takes place after virion entry into a cell and reverse transcription of the RNA genome in dsDNA. The first step in the integration process is 3' processing. This step requires a complex comprising the viral genome, matrix protein, Vpr and integrase. This complex is called the pre-integration complex (PIC). The integrase protein removes 2 nucleotides from each 3' end of the viral DNA, leaving recessed CA OH's at the 3' ends. In the second step, the PIC enters cell nucleus. This process is mediated through integrase and Vpr proteins, and allows the virus to infect a non dividing cell. This ability to enter the nucleus is specific of lentiviruses, other retroviruses cannot and rely on cell division to access cell chromosomes. In the third step, termed strand transfer, the integrase protein joins the previously processed 3' ends to the 5' ends of strands of target cellular DNA at the site of integration. The 5'-ends are produced by integrase-catalyzed staggered cuts, 5 bp apart. A Y-shaped, gapped, recombination intermediate results, with the 5'-ends of the viral DNA strands and the 3' ends of target DNA strands remaining unjoined, flanking a gap of 5 bp. The last step is viral DNA integration into host chromosome. This involves host DNA repair synthesis in which the 5 bp gaps between the unjoined strands are filled in and then ligated. Since this process occurs at both cuts flanking the HIV genome, a 5 bp duplication of host DNA is produced at the ends of HIV-1 integration. Alternatively, Integrase may catalyze the excision of viral DNA just after strand transfer, this is termed disintegration. In Human immunodeficiency virus type 1 group M subtype A (isolate U455) (HIV-1), this protein is Gag-Pol polyprotein (gag-pol).